The chain runs to 415 residues: MKAVGLVVEYNPFHNGHRYHAEQAKIKTDSSVAAAVMSGPFLQRGEPAAVSKWARTKMALENGVDIVIELPYIYAVQKAELFARGSVSLLHHLGCSSLFFGSENGRIEPFIEASEAFSRKEDDCSLILKEELKKGLSYPAAASKAFSHIFKGRDMLDLSKPNNILGFHYVRAIHTSGSAMKPYTTARIASQYHDAELPGDNSRIASATSIRKALIEKGTAAARSFLPEASARELEAYRNSYGIWHSTEDYFSYVKYSLSTLSAEELSRIYEVEEGLEHRILRTIRQARSYREMMERLKTKRYTWTRLQRMNTHILTRTKKEDMHRLLKPSSAPYIRLLGMTKKGQAYLSAKKKELTAPLVSKLSSFSHPALDLDILAGRVYSLPINEPERTLFEKQEFSQAPIRYDEDEKRFLNA.

ATP-binding positions include 7 to 20 (VVEY…HRYH), G101, N162, and 187 to 188 (RI).

The protein belongs to the TmcAL family.

It is found in the cytoplasm. The catalysed reaction is cytidine(34) in elongator tRNA(Met) + acetate + ATP = N(4)-acetylcytidine(34) in elongator tRNA(Met) + AMP + diphosphate. In terms of biological role, catalyzes the formation of N(4)-acetylcytidine (ac(4)C) at the wobble position of elongator tRNA(Met), using acetate and ATP as substrates. First activates an acetate ion to form acetyladenylate (Ac-AMP) and then transfers the acetyl group to tRNA to form ac(4)C34. The chain is tRNA(Met) cytidine acetate ligase from Bacillus velezensis (strain DSM 23117 / BGSC 10A6 / LMG 26770 / FZB42) (Bacillus amyloliquefaciens subsp. plantarum).